The following is a 101-amino-acid chain: CLAVATA3/ESR (CLE)-related protein 18 (101 aa).

An N-terminal signal peptide occupies residues Met1–Ala25. The disordered stretch occupies residues Arg37 to His58. 2 positions are modified to hydroxyproline: Pro40 and Pro43. Residues Gly42 to Ser53 are compositionally biased toward pro residues. Pro43 carries O-linked (Ara...) hydroxyproline glycosylation. Tyr76 is subject to Sulfotyrosine. Residue Pro84 is modified to Hydroxyproline.

Belongs to the CLV3/ESR signal peptide family. The tyrosine sulfation is critical for the function of the peptide. In terms of processing, the O-glycosylation (arabinosylation) of the hydroxyproline Pro-43 enhances binding affinity of the CLE18p peptide for its receptor. In terms of tissue distribution, expressed in roots, leaves, siliques and seedlings.

Its subcellular location is the secreted. The protein localises to the extracellular space. Root growth factor that regulates the pattern of root growth and lateral root development by modulating the length and the number of cortical cells in the root apical meristem (RAM), and the anticlinal asymmetric cell divisions in lateral root initiation cells. In terms of biological role, extracellular signal peptide that regulates cell fate. Represses root apical meristem maintenance. Root growth factor that regulates the pattern of root growth and lateral root development. Regulates the transition of protophloem cells from proliferation to differentiation, thus impinging on postembryonic growth capacity of the root meristem; this signaling pathway requires CRN and CLV2. The polypeptide is CLAVATA3/ESR (CLE)-related protein 18 (Arabidopsis thaliana (Mouse-ear cress)).